The sequence spans 163 residues: 16S rRNA aminocarboxypropyltransferase (163 aa).

S-adenosyl-L-methionine is bound by residues threonine 18, isoleucine 66, leucine 87, and serine 106.

Belongs to the TDD superfamily. TSR3 family.

The protein resides in the cytoplasm. It catalyses the reaction an N(1)-methylpseudouridine in rRNA + S-adenosyl-L-methionine = N(1)-methyl-N(3)-[(3S)-3-amino-3-carboxypropyl]pseudouridine in rRNA + S-methyl-5'-thioadenosine + H(+). Functionally, aminocarboxypropyltransferase that catalyzes the aminocarboxypropyl transfer on pseudouridine corresponding to position 914 in M.jannaschii 16S rRNA. It constitutes the last step in biosynthesis of the hypermodified N1-methyl-N3-(3-amino-3-carboxypropyl) pseudouridine (m1acp3-Psi). This chain is 16S rRNA aminocarboxypropyltransferase, found in Thermoplasma acidophilum (strain ATCC 25905 / DSM 1728 / JCM 9062 / NBRC 15155 / AMRC-C165).